Here is a 505-residue protein sequence, read N- to C-terminus: RNA-splicing ligase RtcB homolog (505 aa).

Residues D119, C122, H227, and H259 each contribute to the Mn(2+) site. Residue 226 to 230 coordinates GMP; the sequence is NHYAE. Residue S300 is modified to Phosphoserine. Residue H353 participates in Mn(2+) binding. GMP is bound by residues 353 to 354, 402 to 405, S409, and 428 to 431; these read HN, GGTM, and HGAG. H428 functions as the GMP-histidine intermediate in the catalytic mechanism. Residue K496 forms a Glycyl lysine isopeptide (Lys-Gly) (interchain with G-Cter in SUMO2) linkage. Position 504 (K504) interacts with GMP.

It belongs to the RtcB family. As to quaternary structure, catalytic component of the tRNA-splicing ligase complex. The cofactor is Mn(2+).

It is found in the nucleus. The protein localises to the cytoplasm. The catalysed reaction is a 3'-end 3'-phospho-ribonucleotide-RNA + a 5'-end dephospho-ribonucleoside-RNA + GTP = a ribonucleotidyl-ribonucleotide-RNA + GMP + diphosphate. It catalyses the reaction a 3'-end 2',3'-cyclophospho-ribonucleotide-RNA + a 5'-end dephospho-ribonucleoside-RNA + GTP + H2O = a ribonucleotidyl-ribonucleotide-RNA + GMP + diphosphate + H(+). Catalytic subunit of the tRNA-splicing ligase complex that acts by directly joining spliced tRNA halves to mature-sized tRNAs by incorporating the precursor-derived splice junction phosphate into the mature tRNA as a canonical 3',5'-phosphodiester. May act as an RNA ligase with broad substrate specificity, and may function toward other RNAs. This Macaca fascicularis (Crab-eating macaque) protein is RNA-splicing ligase RtcB homolog.